The primary structure comprises 117 residues: Pre-mRNA-splicing factor ini1 (117 aa).

The protein belongs to the PHF5 family.

It is found in the nucleus. Required for pre-mRNA splicing. This chain is Pre-mRNA-splicing factor ini1 (ini1), found in Schizosaccharomyces pombe (strain 972 / ATCC 24843) (Fission yeast).